The following is a 158-amino-acid chain: MPLLLTGKKFHNDLKTNKCLAIFAPLEGGYETRLLRRMRAKGFKTFITSARGLGDPEVFLLKLHGVRPPHLGHQSVGRNGALGEVQQVIPQASELFNENDKNKLLWLLEGQVLSQSELESLIEICTKDNKLTIVVEMGGSRKLEWKSLSNYILDEFEN.

It belongs to the complex I NdhN subunit family. In terms of assembly, NDH-1 can be composed of about 15 different subunits; different subcomplexes with different compositions have been identified which probably have different functions.

The protein localises to the cellular thylakoid membrane. It catalyses the reaction a plastoquinone + NADH + (n+1) H(+)(in) = a plastoquinol + NAD(+) + n H(+)(out). It carries out the reaction a plastoquinone + NADPH + (n+1) H(+)(in) = a plastoquinol + NADP(+) + n H(+)(out). NDH-1 shuttles electrons from an unknown electron donor, via FMN and iron-sulfur (Fe-S) centers, to quinones in the respiratory and/or the photosynthetic chain. The immediate electron acceptor for the enzyme in this species is believed to be plastoquinone. Couples the redox reaction to proton translocation, and thus conserves the redox energy in a proton gradient. Cyanobacterial NDH-1 also plays a role in inorganic carbon-concentration. The protein is NAD(P)H-quinone oxidoreductase subunit N of Prochlorococcus marinus (strain MIT 9301).